A 346-amino-acid chain; its full sequence is Phosphate acyltransferase (346 aa).

This sequence belongs to the PlsX family. In terms of assembly, homodimer. Probably interacts with PlsY.

It is found in the cytoplasm. It carries out the reaction a fatty acyl-[ACP] + phosphate = an acyl phosphate + holo-[ACP]. The protein operates within lipid metabolism; phospholipid metabolism. Functionally, catalyzes the reversible formation of acyl-phosphate (acyl-PO(4)) from acyl-[acyl-carrier-protein] (acyl-ACP). This enzyme utilizes acyl-ACP as fatty acyl donor, but not acyl-CoA. This is Phosphate acyltransferase from Delftia acidovorans (strain DSM 14801 / SPH-1).